The following is a 562-amino-acid chain: Protoporphyrinogen oxidase 1, chloroplastic (562 aa).

Residues M1–C48 constitute a chloroplast transit peptide. FAD-binding positions include G88 to G93, E115 to A116, and G137 to S140. The segment at T274–G302 is disordered. Positions I278 to L293 are enriched in basic and acidic residues. FAD contacts are provided by residues V323 and V536–L538.

This sequence belongs to the protoporphyrinogen/coproporphyrinogen oxidase family. Protoporphyrinogen oxidase subfamily. FAD serves as cofactor.

It is found in the plastid. The protein localises to the chloroplast thylakoid membrane. Its subcellular location is the chloroplast inner membrane. It carries out the reaction protoporphyrinogen IX + 3 O2 = protoporphyrin IX + 3 H2O2. Its pathway is porphyrin-containing compound metabolism; protoporphyrin-IX biosynthesis; protoporphyrin-IX from protoporphyrinogen-IX: step 1/1. It functions in the pathway porphyrin-containing compound metabolism; chlorophyll biosynthesis. Catalyzes the 6-electron oxidation of protoporphyrinogen-IX to form protoporphyrin-IX. The chain is Protoporphyrinogen oxidase 1, chloroplastic from Spinacia oleracea (Spinach).